A 95-amino-acid polypeptide reads, in one-letter code: MLKSNNASETAAHKVGDKTAKKVFFRRRKGCPLSVPNAPVIDYKNPELLIKFVSEGGRMLPSRITNVCAKKQRKLNNAIKIARILALLPFVFQAK.

The protein belongs to the bacterial ribosomal protein bS18 family. Part of the 30S ribosomal subunit. Forms a tight heterodimer with protein bS6.

Functionally, binds as a heterodimer with protein bS6 to the central domain of the 16S rRNA, where it helps stabilize the platform of the 30S subunit. The sequence is that of Small ribosomal subunit protein bS18 from Rickettsia rickettsii (strain Sheila Smith).